Consider the following 169-residue polypeptide: ATP synthase subunit b (169 aa).

Residues K11–L31 traverse the membrane as a helical segment.

The protein belongs to the ATPase B chain family. F-type ATPases have 2 components, F(1) - the catalytic core - and F(0) - the membrane proton channel. F(1) has five subunits: alpha(3), beta(3), gamma(1), delta(1), epsilon(1). F(0) has three main subunits: a(1), b(2) and c(10-14). The alpha and beta chains form an alternating ring which encloses part of the gamma chain. F(1) is attached to F(0) by a central stalk formed by the gamma and epsilon chains, while a peripheral stalk is formed by the delta and b chains.

The protein resides in the cell membrane. In terms of biological role, f(1)F(0) ATP synthase produces ATP from ADP in the presence of a proton or sodium gradient. F-type ATPases consist of two structural domains, F(1) containing the extramembraneous catalytic core and F(0) containing the membrane proton channel, linked together by a central stalk and a peripheral stalk. During catalysis, ATP synthesis in the catalytic domain of F(1) is coupled via a rotary mechanism of the central stalk subunits to proton translocation. Component of the F(0) channel, it forms part of the peripheral stalk, linking F(1) to F(0). The sequence is that of ATP synthase subunit b from Leuconostoc citreum (strain KM20).